The chain runs to 90 residues: Small ribosomal subunit protein bS16 (90 aa).

This sequence belongs to the bacterial ribosomal protein bS16 family.

This chain is Small ribosomal subunit protein bS16, found in Bacillus pumilus (strain SAFR-032).